Reading from the N-terminus, the 176-residue chain is Adenine phosphoribosyltransferase (176 aa).

It belongs to the purine/pyrimidine phosphoribosyltransferase family. In terms of assembly, homodimer.

The protein resides in the cytoplasm. The catalysed reaction is AMP + diphosphate = 5-phospho-alpha-D-ribose 1-diphosphate + adenine. It functions in the pathway purine metabolism; AMP biosynthesis via salvage pathway; AMP from adenine: step 1/1. In terms of biological role, catalyzes a salvage reaction resulting in the formation of AMP, that is energically less costly than de novo synthesis. This chain is Adenine phosphoribosyltransferase, found in Borrelia garinii subsp. bavariensis (strain ATCC BAA-2496 / DSM 23469 / PBi) (Borreliella bavariensis).